Reading from the N-terminus, the 195-residue chain is Thymidine kinase (195 aa).

Residues 9-16 (STMNAGKS) and 87-90 (DEAQ) contribute to the ATP site. Residue E88 is the Proton acceptor of the active site. Residues C145, C147, C182, and H185 each coordinate Zn(2+).

It belongs to the thymidine kinase family. Homotetramer.

The protein localises to the cytoplasm. It catalyses the reaction thymidine + ATP = dTMP + ADP + H(+). The sequence is that of Thymidine kinase from Jannaschia sp. (strain CCS1).